Reading from the N-terminus, the 138-residue chain is Translation initiation factor 5A (138 aa).

Residue lysine 37 is modified to Hypusine.

Belongs to the eIF-5A family.

It localises to the cytoplasm. In terms of biological role, functions by promoting the formation of the first peptide bond. This Pyrococcus furiosus (strain ATCC 43587 / DSM 3638 / JCM 8422 / Vc1) protein is Translation initiation factor 5A.